Reading from the N-terminus, the 1077-residue chain is MTNAMKVEGYPSMEWPTSLDIPLKASEELVGIDLETDLPDDPTDLKTLLVEENSEKEHWLTIALAYCNHGKTNEGIKLIEMALDVFQNSERASLHTFLTWAHLNLAKGQSLSVETKEHELTQAELNLKDAIGFDPTWIGNMLATVELYYQRGHYDKALETSDLFVKSIHAEDHRSGRQSKPNCLFLLLRAKLLYQKKNYMASLKIFQELLVINPVLQPDPRIGIGLCFWQLKDSKMAIKSWQRALQLNPKNTSASILVLLGEFRESFTNSTNDKTFKEAFTKALSDLNNIFSENQHNPVLLTLLQTYYYFKGDYQTVLDIYHHRILKMSPMIAKIVLSESSFWCGRAHYALGDYRKSFIMFQESLKKNEDNLLAKLGLGQTQIKNNLLEESIITFENLYKTNESLQELNYILGMLYAGKAFDAKTAKNTSAKEQSNLNEKALKYLERYLKLTLATKNQLVISRAYLVISQLYELQNQYKTSLDYLSKALEEMEFIKKEIPLEVLNNLACYHFINGDFIKADDLFKQAKAKVSDKDESVNITLEYNIARTNEKNDCEKSESIYSQVTSLHPAYIAARIRNLYLKFAQSKIEDSDMSTEMNKLLDLNKSDLEIRSFYGWYLKNSKERKNNEKSTTHNKETLVKYNSHDAYALISLANLYVTIARDGKKSRNPKEQEKSKHSYLKAIQLYQKVLQVDPFNIFAAQGLAIIFAESKRLGPALEILRKVRDSLDNEDVQLNLAHCYLEMREYGKAIENYELVLKKFDNEKTRPHILNLLGRAWYARAIKERSVNFYQKALENAKTALDLFVKESSKSKFIHSVKFNIALLHFQIAETLRRSNPKFRTVQQIKDSLEGLKEGLELFRELNDLKEFNMIPKEELEQRIQLGETTMKSALERSLNEQEEFEKEQSAKIDEARKILEENELKEQGWMKQEEEARRLKLEKQAEEYRKLQDEAQKLIQEREAMAISEHNVKDDSDLSDKDNEYDEEKPRQKRKRSTKTKNSGESKRRKAAKKTLSDSDEDDDDVVKKPSHNKGKKSQLSNEFIEDSDEEEAQMSGSEQNKNDDNDENNDNDDNDGLF.

TPR repeat units lie at residues 56–89, 138–174, 183–216, 218–251, 298–332, 338–371, 373–405, 421–455, 462–495, 501–534, 540–572, 664–697, 699–731, 732–764, 768–801, and 830–863; these read KEHW…FQNS, IGNM…EDHR, CLFL…NPVL, PDPR…NPKN, PVLL…SPMI, SESS…NEDN, LAKL…NESL, FDAK…TLAT, SRAY…MEFI, LEVL…VSDK, ITLE…HPAY, GKKS…DPFN, FAAQ…LDNE, DVQL…FDNE, PHIL…AKTA, and AETL…FREL. Basic and acidic residues predominate over residues 959–980; that stretch reads EREAMAISEHNVKDDSDLSDKD. Positions 959–1077 are disordered; it reads EREAMAISEH…NDNDDNDGLF (119 aa). Phosphoserine is present on residues S1015 and S1017. 2 stretches are compositionally biased toward acidic residues: residues 1042-1051 and 1063-1077; these read FIEDSDEEEA and DNDE…DGLF.

As to quaternary structure, component of the PAF1 complex which consists of at least CDC73, CTR9, LEO1, PAF1 and RTF1. Interacts with SPT6. Interacts with FACT subunits POB3 and SPT16.

It is found in the nucleus. It localises to the nucleoplasm. The PAF1 complex is a multifunctional complex. Involved in transcription initiation via genetic interactions with TATA-binding proteins. Involved in elongation. It regulates 3'-end formation of snR47 by modulating the recruitment or stable association of NRD1 and NAB3 with RNA polymerase II. Also has a role in transcription-coupled histone modification. Required for activation of RAD6 ubiquitin conjugate and the BRE1 ubiquitin ligase which ubiquitinate 'Lys-126' histone H2B. Activates the SET1 histone methyltransferase complex for methylation of 'Lys-4' of histone H3 and for methylation of 'Lys-73' of histone H3 by DOT1 and 'Lys-36' of histone H3 by SET2. In complex with PAF1, required for normal CLN1 and CLN2 G1 cyclin expression in late G1. Also has a role in chromosome segregation where it appears to be involved in microtubule placement. This Saccharomyces cerevisiae (strain ATCC 204508 / S288c) (Baker's yeast) protein is RNA polymerase-associated protein CTR9 (CTR9).